The sequence spans 54 residues: Large ribosomal subunit protein bL33 (54 aa).

The protein belongs to the bacterial ribosomal protein bL33 family.

The sequence is that of Large ribosomal subunit protein bL33 from Corynebacterium urealyticum (strain ATCC 43042 / DSM 7109).